The primary structure comprises 808 residues: Phospholipase D alpha 1 (808 aa).

In terms of domain architecture, C2 spans M1–V125. D186 is a Ca(2+) binding site. One can recognise a PLD phosphodiesterase 1 domain in the interval T326 to R364. Residues H331, K333, and D338 contribute to the active site. Residue H331 participates in a 1,2-diacyl-sn-glycero-3-phosphate binding. Ca(2+) is bound by residues H370 and H404. A PLD phosphodiesterase 2 domain is found at F654–S681. Residues H659, K661, and D666 contribute to the active site. Residue H659 participates in a 1,2-diacyl-sn-glycero-3-phosphate binding. E720 provides a ligand contact to Ca(2+).

The protein belongs to the phospholipase D family. C2-PLD subfamily. Ca(2+) is required as a cofactor.

The enzyme catalyses a 1,2-diacyl-sn-glycero-3-phosphocholine + H2O = a 1,2-diacyl-sn-glycero-3-phosphate + choline + H(+). Its function is as follows. Hydrolyzes glycerol-phospholipids at the terminal phosphodiesteric bond. Plays an important role in various cellular processes. The protein is Phospholipase D alpha 1 (PLD1) of Spuriopimpinella brachycarpa (Chamnamul).